The sequence spans 408 residues: MAKITKVSPLAPAAFPTLPVIDGVRLASIAAGVRYQGRTDVMLAVLDPGTSVAGVFTRSATRSAPVLDCQAKIGGASDGPAAILVNSGNSNAFTGHYGQTSVAEVTQAVADVTGVPVGRVFTSSTGVIGEPMKHERIVAKLGDLNAALSPDALEDAARAIMTTDTFAKGASRTVGIDGKMVKIAGIAKGSGMIAPDMATMLVYIFTDARVEQGALQAMLSAMTDKTFNCITVDSDTSTSDTLLLCATGASGVDAEGNAEFAAALEAVMLDLAQQVVRDGEGATKFVEIRVTGAANDVDAKVHGLAIANSPLVKTAIAGEDPNWGRVVMAIGKSGAAADRDLLSISFGDILVAEKGWVSPNYREEDAAAYMKGQDLVIGVDLGLGAGKSTVWTCDLTHGYIEINADYRS.

6 residues coordinate substrate: T162, K188, T199, E280, N403, and S408. T199 serves as the catalytic Nucleophile.

It belongs to the ArgJ family. As to quaternary structure, heterotetramer of two alpha and two beta chains.

The protein resides in the cytoplasm. The catalysed reaction is N(2)-acetyl-L-ornithine + L-glutamate = N-acetyl-L-glutamate + L-ornithine. It carries out the reaction L-glutamate + acetyl-CoA = N-acetyl-L-glutamate + CoA + H(+). Its pathway is amino-acid biosynthesis; L-arginine biosynthesis; L-ornithine and N-acetyl-L-glutamate from L-glutamate and N(2)-acetyl-L-ornithine (cyclic): step 1/1. The protein operates within amino-acid biosynthesis; L-arginine biosynthesis; N(2)-acetyl-L-ornithine from L-glutamate: step 1/4. Its function is as follows. Catalyzes two activities which are involved in the cyclic version of arginine biosynthesis: the synthesis of N-acetylglutamate from glutamate and acetyl-CoA as the acetyl donor, and of ornithine by transacetylation between N(2)-acetylornithine and glutamate. In Ruegeria pomeroyi (strain ATCC 700808 / DSM 15171 / DSS-3) (Silicibacter pomeroyi), this protein is Arginine biosynthesis bifunctional protein ArgJ.